The primary structure comprises 337 residues: Tert-butanol monooxygenase / tert-amyl alcohol desaturase reductase subunit (337 aa).

Residues 9–114 enclose the FAD-binding FR-type domain; sequence KYPKTALNLR…GHPRNNFPLI (106 aa). A 2Fe-2S ferredoxin-type domain is found at 254–337; the sequence is FQIKIASTGT…SKGATLVLDL (84 aa). [2Fe-2S] cluster contacts are provided by cysteine 288, cysteine 293, cysteine 296, and cysteine 324.

Belongs to the PDR/VanB family. As to quaternary structure, this two-component enzyme is composed of an oxygenase (MdpJ) and a reductase (MdpK). It depends on [2Fe-2S] cluster as a cofactor.

In terms of biological role, reductase component of a two-component system involved in the degradation of tertiary alcohols such as tert-butyl alcohol (TBA) and tert-amyl alcohol (TAA). MdpK probably provides electrons via its [2Fe-2S] iron-sulfur cluster to the MdpJ oxygenase subunit. This is Tert-butanol monooxygenase / tert-amyl alcohol desaturase reductase subunit from Aquincola tertiaricarbonis.